The following is a 132-amino-acid chain: Small ribosomal subunit protein uS8 (132 aa).

It belongs to the universal ribosomal protein uS8 family. Part of the 30S ribosomal subunit. Contacts proteins S5 and S12.

Its function is as follows. One of the primary rRNA binding proteins, it binds directly to 16S rRNA central domain where it helps coordinate assembly of the platform of the 30S subunit. In Anaeromyxobacter dehalogenans (strain 2CP-1 / ATCC BAA-258), this protein is Small ribosomal subunit protein uS8.